We begin with the raw amino-acid sequence, 460 residues long: WD repeat-containing protein 41 (460 aa).

WD repeat units lie at residues 40 to 79 (EAHR…KLLE), 82 to 128 (GHTQ…QIQR), 131 to 168 (CFQS…LCKT), 220 to 258 (DHQD…VQAC), 321 to 359 (AHDS…QLAA), and 403 to 441 (GHSS…SGVR).

In terms of assembly, component of the C9orf72-SMCR8 complex, at least composed of C9orf72, SMCR8 and WDR41. The complex is formed of two protomers, each individually consisting of one molecule each of C9orf72, SMCR8 and WDR41. The protomers homodimerize via an interaction between C9orf72 (via C-terminus) and SMCR8 (via N-terminus). Within each protomer SMCR8 (via DENN domain) acts as a bridging protein between WDR41 (via C-terminus and N-terminus) and C9orf72 (via C-terminus). The C9orf72-SMCR8 complex associates with the ULK1/ATG1 kinase complex.

The protein localises to the cytoplasm. Non-catalytic component of the C9orf72-SMCR8 complex, a complex that has guanine nucleotide exchange factor (GEF) activity and regulates autophagy. The C9orf72-SMCR8 complex promotes the exchange of GDP to GTP, converting inactive GDP-bound RAB8A and RAB39B into their active GTP-bound form, thereby promoting autophagosome maturation. As part of the C9orf72-SMCR8 complex, stimulates RAB8A and RAB11A GTPase activity in vitro, however WDR42 is shown not be an essential complex component for this function. The C9orf72-SMCR8 complex also acts as a negative regulator of autophagy initiation by interacting with the ULK1/ATG1 kinase complex and inhibiting its protein kinase activity. The polypeptide is WD repeat-containing protein 41 (Mus musculus (Mouse)).